Here is a 255-residue protein sequence, read N- to C-terminus: 1-(5-phosphoribosyl)-5-[(5-phosphoribosylamino)methylideneamino] imidazole-4-carboxamide isomerase (255 aa).

D8 acts as the Proton acceptor in catalysis. Residue D129 is the Proton donor of the active site.

This sequence belongs to the HisA/HisF family.

The protein resides in the cytoplasm. It catalyses the reaction 1-(5-phospho-beta-D-ribosyl)-5-[(5-phospho-beta-D-ribosylamino)methylideneamino]imidazole-4-carboxamide = 5-[(5-phospho-1-deoxy-D-ribulos-1-ylimino)methylamino]-1-(5-phospho-beta-D-ribosyl)imidazole-4-carboxamide. The protein operates within amino-acid biosynthesis; L-histidine biosynthesis; L-histidine from 5-phospho-alpha-D-ribose 1-diphosphate: step 4/9. In Prochlorococcus marinus (strain MIT 9301), this protein is 1-(5-phosphoribosyl)-5-[(5-phosphoribosylamino)methylideneamino] imidazole-4-carboxamide isomerase.